The following is a 1178-amino-acid chain: Dual specificity mitogen-activated protein kinase kinase hemipterous (1178 aa).

Disordered regions lie at residues 74 to 103 and 115 to 148; these read SGSG…SSSS and ATGT…GGGL. 2 stretches are compositionally biased toward low complexity: residues 91–103 and 115–128; these read ATPF…SSSS and ATGT…PPTT. One can recognise a Protein kinase domain in the interval 197–456; the sequence is LKHLGDLGNG…YPELLAQPFI (260 aa). ATP is bound by residues 203 to 211 and lysine 226; that span reads LGNGTSGNV. The Proton acceptor role is filled by aspartate 320. Serine 348 is modified (phosphoserine). Threonine 352 carries the post-translational modification Phosphothreonine. Positions 522–648 are disordered; sequence TYAGQSPTNP…DESPKKESMF (127 aa). Over residues 523 to 543 the composition is skewed to polar residues; it reads YAGQSPTNPQKTIKPTQIPSY. Residues 544–570 are compositionally biased toward low complexity; the sequence is QQQQSQFFMQSATQLPQTTTTTPTATT. Residues 574 to 593 show a composition bias toward gly residues; it reads GGSGNGNGRGNGSGGSGNGS. A compositionally biased stretch (low complexity) spans 594–608; it reads GSSSSASPLSPPSAG. Over residues 636–646 the composition is skewed to basic and acidic residues; sequence KYNDESPKKES. Phosphoserine is present on residues serine 646 and serine 662. 6 disordered regions span residues 715 to 783, 797 to 851, 912 to 933, 999 to 1026, 1042 to 1108, and 1122 to 1178; these read TTTP…LQPG, QNQL…STCS, GTSP…GNGN, TSPV…VVNN, SSSS…NRGQ, and GQPP…TIDQ. Positions 724-734 are enriched in polar residues; that stretch reads TENSQAYDSCD. Low complexity-rich tracts occupy residues 735–783, 808–817, and 837–851; these read SSSN…LQPG, RYQQQRQQPP, and THST…STCS. Positions 912-928 are enriched in polar residues; the sequence is GTSPTLQSRSPEQQSDY. The segment covering 1042 to 1055 has biased composition (low complexity); it reads SSSSNTSQSTSPTT. Residues serine 1150 and serine 1154 each carry the phosphoserine modification. Positions 1168-1178 are enriched in basic and acidic residues; it reads PQRRIYRTIDQ.

The protein belongs to the protein kinase superfamily. STE Ser/Thr protein kinase family. MAP kinase kinase subfamily. MAPKK is itself dependent on Ser/Thr phosphorylation for activity catalyzed by MAP kinase kinase kinases. In terms of processing, weakly autophosphorylated.

The catalysed reaction is L-seryl-[protein] + ATP = O-phospho-L-seryl-[protein] + ADP + H(+). The enzyme catalyses L-threonyl-[protein] + ATP = O-phospho-L-threonyl-[protein] + ADP + H(+). It carries out the reaction L-tyrosyl-[protein] + ATP = O-phospho-L-tyrosyl-[protein] + ADP + H(+). Its function is as follows. Required for the epithelial cell sheet movement called dorsal closure (DC), which allows establishment of the dorsal epidermis. Controls the expression in the dorsal epithelium edges of another dorsal closure gene, puckered (puc). Phosphorylates and activates the MAP kinase bsk; bsk signal transduction pathway mediates an immune response and morphogenesis. The polypeptide is Dual specificity mitogen-activated protein kinase kinase hemipterous (hep) (Drosophila melanogaster (Fruit fly)).